The following is a 527-amino-acid chain: Phosphoenolpyruvate carboxykinase (ATP) (527 aa).

Residues R56, Y192, and K198 each coordinate substrate. ATP-binding positions include K198, H217, and 233 to 241 (GLSGTGKTT). K198 and H217 together coordinate Mn(2+). Residue D254 participates in Mn(2+) binding. 3 residues coordinate ATP: E282, R319, and T444. R319 is a binding site for substrate.

Belongs to the phosphoenolpyruvate carboxykinase (ATP) family. Mn(2+) is required as a cofactor.

It localises to the cytoplasm. It carries out the reaction oxaloacetate + ATP = phosphoenolpyruvate + ADP + CO2. The protein operates within carbohydrate biosynthesis; gluconeogenesis. Its function is as follows. Involved in the gluconeogenesis. Catalyzes the conversion of oxaloacetate (OAA) to phosphoenolpyruvate (PEP) through direct phosphoryl transfer between the nucleoside triphosphate and OAA. This is Phosphoenolpyruvate carboxykinase (ATP) from Bacillus velezensis (strain DSM 23117 / BGSC 10A6 / LMG 26770 / FZB42) (Bacillus amyloliquefaciens subsp. plantarum).